The chain runs to 312 residues: MNWREIAVTVSSVGEEAVADLFYQLGCPGVSVEDPELLQSYVESGNWDYHDFGEIALTGTSVVKGYICEDHELQPKLRQLDEGLKELLQRFPEWVLQVKGLTVQEEDWATSWKAYFKPVRIGRHFLIKPSWEEVTPLPEDIILELDPGMAFGTGTHATTSLCLETLEETVKPDMRIFDLGTGSGILAIAAAKLGAQVEAIDLDSVAVKVAQENVELNQVADRISVRQGDLGTVLQGQADLVVANIIADVILMLIPDLKRIMKEDGEFLASGIIGHRSSDVEAGLGEHGLEVLEKKEDSGWVLLRARWQRASL.

Residues T159, G180, D201, and N244 each coordinate S-adenosyl-L-methionine.

It belongs to the methyltransferase superfamily. PrmA family.

The protein resides in the cytoplasm. It carries out the reaction L-lysyl-[protein] + 3 S-adenosyl-L-methionine = N(6),N(6),N(6)-trimethyl-L-lysyl-[protein] + 3 S-adenosyl-L-homocysteine + 3 H(+). Functionally, methylates ribosomal protein L11. This is Ribosomal protein L11 methyltransferase from Desulfitobacterium hafniense (strain DSM 10664 / DCB-2).